The following is a 362-amino-acid chain: Alpha-glucoside transport ATP-binding protein AglK (362 aa).

The region spanning 4 to 235 (LLLKDIRKSY…PANLFVARFI (232 aa)) is the ABC transporter domain. 36–43 (GPSGCGKS) serves as a coordination point for ATP.

Belongs to the ABC transporter superfamily.

It is found in the cell inner membrane. Part of the binding-protein-dependent transport system for alpha-glucosides such as sucrose, maltose and trehalose. Probably responsible for energy coupling to the transport system. The sequence is that of Alpha-glucoside transport ATP-binding protein AglK (aglK) from Rhizobium meliloti (strain 1021) (Ensifer meliloti).